We begin with the raw amino-acid sequence, 191 residues long: Photosystem I assembly protein Ycf4 (191 aa).

A run of 2 helical transmembrane segments spans residues 33 to 53 and 74 to 94; these read LLAV…LSSY and LVMG…WAMI.

This sequence belongs to the Ycf4 family.

The protein localises to the cellular thylakoid membrane. Its function is as follows. Seems to be required for the assembly of the photosystem I complex. This is Photosystem I assembly protein Ycf4 from Prochlorococcus marinus (strain MIT 9303).